The following is a 59-amino-acid chain: MKAFYGILIIFILISMLDLSQQVFINAKCRGSPQCLPKCKEAIGKAAGKCMNGKCKCYP.

Residues 1–22 (MKAFYGILIIFILISMLDLSQQ) form the signal peptide. Intrachain disulfides connect Cys-29/Cys-50, Cys-35/Cys-55, and Cys-39/Cys-57.

This sequence belongs to the short scorpion toxin superfamily. Potassium channel inhibitor family. Alpha-KTx 04 subfamily. Expressed by the venom gland.

Its subcellular location is the secreted. Its function is as follows. Potently blocks Kv1.1/KCNA1 (85%), Kv1.2/KCNA2 (91%), Kv1.3/KCNA3 (89%), Kv1.6/KCNA6 (94%), and Shaker (97%). The polypeptide is Putative potassium channel toxin Ts23 (Tityus serrulatus (Brazilian scorpion)).